The sequence spans 312 residues: Glyoxylate/hydroxypyruvate reductase A (312 aa).

Residue Arg227 is part of the active site. His275 acts as the Proton donor in catalysis.

This sequence belongs to the D-isomer specific 2-hydroxyacid dehydrogenase family. GhrA subfamily.

The protein resides in the cytoplasm. The catalysed reaction is glycolate + NADP(+) = glyoxylate + NADPH + H(+). It carries out the reaction (R)-glycerate + NAD(+) = 3-hydroxypyruvate + NADH + H(+). The enzyme catalyses (R)-glycerate + NADP(+) = 3-hydroxypyruvate + NADPH + H(+). Functionally, catalyzes the NADPH-dependent reduction of glyoxylate and hydroxypyruvate into glycolate and glycerate, respectively. The protein is Glyoxylate/hydroxypyruvate reductase A of Shigella boydii serotype 18 (strain CDC 3083-94 / BS512).